Consider the following 160-residue polypeptide: Small ribosomal subunit protein uS7 (160 aa).

Belongs to the universal ribosomal protein uS7 family. Part of the 30S ribosomal subunit. Contacts proteins S9 and S11.

Functionally, one of the primary rRNA binding proteins, it binds directly to 16S rRNA where it nucleates assembly of the head domain of the 30S subunit. Is located at the subunit interface close to the decoding center, probably blocks exit of the E-site tRNA. In Rickettsia typhi (strain ATCC VR-144 / Wilmington), this protein is Small ribosomal subunit protein uS7.